The following is a 1075-amino-acid chain: DNA-directed RNA polymerase subunit beta (1075 aa).

It belongs to the RNA polymerase beta chain family. In terms of assembly, in plastids the minimal PEP RNA polymerase catalytic core is composed of four subunits: alpha, beta, beta', and beta''. When a (nuclear-encoded) sigma factor is associated with the core the holoenzyme is formed, which can initiate transcription.

Its subcellular location is the plastid. The protein resides in the chloroplast. It carries out the reaction RNA(n) + a ribonucleoside 5'-triphosphate = RNA(n+1) + diphosphate. In terms of biological role, DNA-dependent RNA polymerase catalyzes the transcription of DNA into RNA using the four ribonucleoside triphosphates as substrates. This Pinus thunbergii (Japanese black pine) protein is DNA-directed RNA polymerase subunit beta.